Reading from the N-terminus, the 223-residue chain is Na(+)-translocating NADH-quinone reductase subunit D (223 aa).

The next 5 helical transmembrane spans lie at threonine 42–isoleucine 62, isoleucine 66–valine 86, valine 103–methionine 123, phenylalanine 131–isoleucine 151, and asparagine 178–leucine 198.

It belongs to the NqrDE/RnfAE family. Composed of six subunits; NqrA, NqrB, NqrC, NqrD, NqrE and NqrF.

It is found in the cell inner membrane. The enzyme catalyses a ubiquinone + n Na(+)(in) + NADH + H(+) = a ubiquinol + n Na(+)(out) + NAD(+). Its function is as follows. NQR complex catalyzes the reduction of ubiquinone-1 to ubiquinol by two successive reactions, coupled with the transport of Na(+) ions from the cytoplasm to the periplasm. NqrA to NqrE are probably involved in the second step, the conversion of ubisemiquinone to ubiquinol. The polypeptide is Na(+)-translocating NADH-quinone reductase subunit D (Pseudomonas paraeruginosa (strain DSM 24068 / PA7) (Pseudomonas aeruginosa (strain PA7))).